A 358-amino-acid chain; its full sequence is 3-dehydroquinate synthase (358 aa).

Residues aspartate 70–lysine 75, glycine 104–aspartate 108, threonine 128–threonine 129, lysine 141, lysine 150, and cysteine 168–threonine 171 contribute to the NAD(+) site. Residues glutamate 183, histidine 246, and histidine 263 each contribute to the Zn(2+) site.

It belongs to the sugar phosphate cyclases superfamily. Dehydroquinate synthase family. Requires Co(2+) as cofactor. The cofactor is Zn(2+). It depends on NAD(+) as a cofactor.

It localises to the cytoplasm. It carries out the reaction 7-phospho-2-dehydro-3-deoxy-D-arabino-heptonate = 3-dehydroquinate + phosphate. It participates in metabolic intermediate biosynthesis; chorismate biosynthesis; chorismate from D-erythrose 4-phosphate and phosphoenolpyruvate: step 2/7. Catalyzes the conversion of 3-deoxy-D-arabino-heptulosonate 7-phosphate (DAHP) to dehydroquinate (DHQ). In Shewanella baltica (strain OS185), this protein is 3-dehydroquinate synthase.